Reading from the N-terminus, the 338-residue chain is Ketol-acid reductoisomerase (NADP(+)) (338 aa).

Residues 1-181 (MNVYYDKDCD…GGGRSGIIET (181 aa)) enclose the KARI N-terminal Rossmann domain. Residues 24-27 (YGSQ), Arg-47, Ser-50, Ser-52, and 82-85 (DEFQ) contribute to the NADP(+) site. Residue His-107 is part of the active site. NADP(+) is bound at residue Gly-133. In terms of domain architecture, KARI C-terminal knotted spans 182–327 (TFKDETETDL…AKLRSMMPWI (146 aa)). Positions 190, 194, 226, and 230 each coordinate Mg(2+). Ser-251 contributes to the substrate binding site.

The protein belongs to the ketol-acid reductoisomerase family. Mg(2+) is required as a cofactor.

The catalysed reaction is (2R)-2,3-dihydroxy-3-methylbutanoate + NADP(+) = (2S)-2-acetolactate + NADPH + H(+). The enzyme catalyses (2R,3R)-2,3-dihydroxy-3-methylpentanoate + NADP(+) = (S)-2-ethyl-2-hydroxy-3-oxobutanoate + NADPH + H(+). Its pathway is amino-acid biosynthesis; L-isoleucine biosynthesis; L-isoleucine from 2-oxobutanoate: step 2/4. It functions in the pathway amino-acid biosynthesis; L-valine biosynthesis; L-valine from pyruvate: step 2/4. Involved in the biosynthesis of branched-chain amino acids (BCAA). Catalyzes an alkyl-migration followed by a ketol-acid reduction of (S)-2-acetolactate (S2AL) to yield (R)-2,3-dihydroxy-isovalerate. In the isomerase reaction, S2AL is rearranged via a Mg-dependent methyl migration to produce 3-hydroxy-3-methyl-2-ketobutyrate (HMKB). In the reductase reaction, this 2-ketoacid undergoes a metal-dependent reduction by NADPH to yield (R)-2,3-dihydroxy-isovalerate. This chain is Ketol-acid reductoisomerase (NADP(+)), found in Psychrobacter sp. (strain PRwf-1).